We begin with the raw amino-acid sequence, 425 residues long: CinA-like protein (425 aa).

This sequence belongs to the CinA family.

In Trichodesmium erythraeum (strain IMS101), this protein is CinA-like protein.